The following is a 302-amino-acid chain: N(G),N(G)-dimethylarginine dimethylaminohydrolase (302 aa).

3 residues coordinate substrate: Asp-102, Arg-127, and Arg-172. The active-site Proton donor is the His-201. Catalysis depends on Cys-295, which acts as the Nucleophile.

Belongs to the DDAH family.

It carries out the reaction N(omega),N(omega)-dimethyl-L-arginine + H2O = dimethylamine + L-citrulline. The catalysed reaction is N(omega)-methyl-L-arginine + H2O = L-citrulline + methylamine. Its function is as follows. Hydrolyzes N(G),N(G)-dimethyl-L-arginine (ADMA) and N(G)-monomethyl-L-arginine (MMA). The chain is N(G),N(G)-dimethylarginine dimethylaminohydrolase from Mycobacterium tuberculosis (strain ATCC 25618 / H37Rv).